A 147-amino-acid polypeptide reads, in one-letter code: Large ribosomal subunit protein bL9 (147 aa).

Belongs to the bacterial ribosomal protein bL9 family.

Functionally, binds to the 23S rRNA. In Thermoanaerobacter pseudethanolicus (strain ATCC 33223 / 39E) (Clostridium thermohydrosulfuricum), this protein is Large ribosomal subunit protein bL9.